Consider the following 330-residue polypeptide: Cathepsin K (330 aa).

Residues 1–16 (MWGLKVVLLLPVMSSA) form the signal peptide. The propeptide at 17 to 115 (LYPEEILDTQ…TLYIPDWEGR (99 aa)) is activation peptide. Residue asparagine 104 is glycosylated (N-linked (GlcNAc...) asparagine). Intrachain disulfides connect cysteine 137–cysteine 178, cysteine 171–cysteine 211, and cysteine 270–cysteine 319. Cysteine 140 is an active-site residue. Active-site residues include histidine 277 and asparagine 297.

Belongs to the peptidase C1 family. In terms of tissue distribution, expressed in the thyroid epithelial cells.

The protein resides in the lysosome. The protein localises to the secreted. It is found in the apical cell membrane. The catalysed reaction is Broad proteolytic activity. With small-molecule substrates and inhibitors, the major determinant of specificity is P2, which is preferably Leu, Met &gt; Phe, and not Arg.. Thiol protease involved in osteoclastic bone resorption and may participate partially in the disorder of bone remodeling. Displays potent endoprotease activity against fibrinogen at acid pH. May play an important role in extracellular matrix degradation. Involved in the release of thyroid hormone thyroxine (T4) by limited proteolysis of TG/thyroglobulin in the thyroid follicle lumen. This is Cathepsin K (CTSK) from Sus scrofa (Pig).